Here is a 71-residue protein sequence, read N- to C-terminus: Exodeoxyribonuclease 7 small subunit (71 aa).

Belongs to the XseB family. In terms of assembly, heterooligomer composed of large and small subunits.

It localises to the cytoplasm. It carries out the reaction Exonucleolytic cleavage in either 5'- to 3'- or 3'- to 5'-direction to yield nucleoside 5'-phosphates.. Its function is as follows. Bidirectionally degrades single-stranded DNA into large acid-insoluble oligonucleotides, which are then degraded further into small acid-soluble oligonucleotides. The sequence is that of Exodeoxyribonuclease 7 small subunit from Clostridium botulinum (strain 657 / Type Ba4).